The sequence spans 104 residues: Pole-localizer protein TmaR (104 aa).

2 coiled-coil regions span residues 7–34 and 76–96; these read IVNQ…NRKR and SAEI…LTEE.

This sequence belongs to the pole-localizer TmaR family.

It localises to the cytoplasm. Functionally, pole-localizer protein involved in the regulation of several cellular processes. This chain is Pole-localizer protein TmaR, found in Vibrio campbellii (strain ATCC BAA-1116).